The primary structure comprises 181 residues: Salmonella anti-inflammatory response activator (181 aa).

A helical transmembrane segment spans residues 4–24; sequence FVYIYILVIYGSYLWFSLGGN.

In terms of assembly, interacts with host (human) STAT3.

It localises to the membrane. It is found in the host cytoplasm. In terms of biological role, a Salmonella strain-specific effector that induces a host STAT3-dependent anti-inflammatory pathway. In bacteria-infected host cells (human) leads to phosphorylation of host STAT3, at least on 'Tyr-705' and interleukin-10 (IL-10, IL10) production; expressing the gene alone in host cells induces STAT3 phosphorylation and IL-10 production. IL-10 production requires STAT3 in infected cells. Contributes to virulence in mouse infection models. Encoded in only a few S.typhimurium serovars, it may be a specific effector for adaptation to bovine hosts. The polypeptide is Salmonella anti-inflammatory response activator (Salmonella typhimurium (strain 14028s / SGSC 2262)).